The primary structure comprises 588 residues: L-fucose isomerase (588 aa).

Catalysis depends on proton acceptor residues E335 and D359. The Mn(2+) site is built by E335, D359, and H525.

Belongs to the L-fucose isomerase family. Requires Mn(2+) as cofactor.

The protein resides in the cytoplasm. It carries out the reaction L-fucose = L-fuculose. It functions in the pathway carbohydrate degradation; L-fucose degradation; L-lactaldehyde and glycerone phosphate from L-fucose: step 1/3. In terms of biological role, converts the aldose L-fucose into the corresponding ketose L-fuculose. The chain is L-fucose isomerase from Streptococcus pneumoniae (strain 70585).